The primary structure comprises 394 residues: Elongation factor Tu (394 aa).

Residues lysine 10–glutamate 204 enclose the tr-type G domain. The G1 stretch occupies residues glycine 19–threonine 26. Glycine 19–threonine 26 contacts GTP. Threonine 26 contributes to the Mg(2+) binding site. Residues glycine 60–asparagine 64 form a G2 region. A G3 region spans residues aspartate 81–glycine 84. GTP contacts are provided by residues aspartate 81–histidine 85 and asparagine 136–aspartate 139. Residues asparagine 136–aspartate 139 are G4. The G5 stretch occupies residues serine 174–leucine 176.

Belongs to the TRAFAC class translation factor GTPase superfamily. Classic translation factor GTPase family. EF-Tu/EF-1A subfamily. In terms of assembly, monomer.

The protein localises to the cytoplasm. The enzyme catalyses GTP + H2O = GDP + phosphate + H(+). GTP hydrolase that promotes the GTP-dependent binding of aminoacyl-tRNA to the A-site of ribosomes during protein biosynthesis. The chain is Elongation factor Tu from Aeromonas salmonicida (strain A449).